Consider the following 372-residue polypeptide: Chaperone protein DnaJ (372 aa).

The region spanning 5-69 (DYYEVLGLSK…QKKAQYDQFG (65 aa)) is the J domain. The CR-type zinc finger occupies 129-211 (GAEKEISVKK…CGGTGRKVKT (83 aa)). C142, C145, C159, C162, C185, C188, C199, and C202 together coordinate Zn(2+). CXXCXGXG motif repeat units follow at residues 142–149 (CDTCDGSG), 159–166 (CSTCGGRG), 185–192 (CPDCGGTG), and 199–206 (CSDCGGTG).

The protein belongs to the DnaJ family. In terms of assembly, homodimer. The cofactor is Zn(2+).

The protein resides in the cytoplasm. Participates actively in the response to hyperosmotic and heat shock by preventing the aggregation of stress-denatured proteins and by disaggregating proteins, also in an autonomous, DnaK-independent fashion. Unfolded proteins bind initially to DnaJ; upon interaction with the DnaJ-bound protein, DnaK hydrolyzes its bound ATP, resulting in the formation of a stable complex. GrpE releases ADP from DnaK; ATP binding to DnaK triggers the release of the substrate protein, thus completing the reaction cycle. Several rounds of ATP-dependent interactions between DnaJ, DnaK and GrpE are required for fully efficient folding. Also involved, together with DnaK and GrpE, in the DNA replication of plasmids through activation of initiation proteins. In Macrococcus caseolyticus (strain JCSC5402) (Macrococcoides caseolyticum), this protein is Chaperone protein DnaJ.